A 685-amino-acid chain; its full sequence is Methionine--tRNA ligase (685 aa).

Positions 12 to 22 (PYANGSIHLGH) match the 'HIGH' region motif. Residues C143, C146, C156, and C159 each contribute to the Zn(2+) site. The 'KMSKS' region signature appears at 339-343 (KMSKS). An ATP-binding site is contributed by K342. A tRNA-binding domain is found at 582–685 (DFMKIDMRVA…TGAQPGDKVG (104 aa)).

The protein belongs to the class-I aminoacyl-tRNA synthetase family. MetG type 1 subfamily. Homodimer. The cofactor is Zn(2+).

Its subcellular location is the cytoplasm. It catalyses the reaction tRNA(Met) + L-methionine + ATP = L-methionyl-tRNA(Met) + AMP + diphosphate. Functionally, is required not only for elongation of protein synthesis but also for the initiation of all mRNA translation through initiator tRNA(fMet) aminoacylation. The protein is Methionine--tRNA ligase of Neisseria meningitidis serogroup B (strain ATCC BAA-335 / MC58).